The chain runs to 352 residues: Divinyl chlorophyll a/b light-harvesting protein PcbA (352 aa).

6 consecutive transmembrane segments (helical) span residues 27–47 (FIAAHVAHAGLIVFWAGAFTL), 90–110 (VLAIAIVHLVSSMVLAAGGLL), 142–162 (FILGHHLIILGFAVILLVEWA), 203–223 (VMGGHAFLAFVLITGGAWHIA), 243–263 (AVLSWSLAGIGWMAIIAAFWS), and 306–326 (LANVHYYFGFFFIQGHLWHAL).

This sequence belongs to the PsbB/PsbC family. IsiA/Pcb subfamily. In terms of assembly, the antenna complex consists of divinyl chlorophylls (a and b) and divinyl chlorophyll a/b binding proteins and binds less divinyl chlorophyll b than does low-light-adapted Prochlorococcus. Also forms complexes with PSII, consisting of a PSII dimer and 4 or 8 PcbA subunits. These complexes are also found under conditions of iron-starvation. Divinyl chlorophyll a serves as cofactor. Requires divinyl chlorophyll b as cofactor.

It localises to the cellular thylakoid membrane. Functionally, the antenna complex functions as a light receptor, it captures and delivers excitation energy to photosystem II and possibly to photosystem I. The Prochlorales pcb genes are not related to higher plant LHCs. The sequence is that of Divinyl chlorophyll a/b light-harvesting protein PcbA (pcbA) from Prochlorococcus marinus subsp. pastoris (strain CCMP1986 / NIES-2087 / MED4).